The sequence spans 178 residues: MEQYHGTTILSVRRGNSVAMGGDGQVTLGNIVIKATARKVRRLYNGRILAGFAGGTADAFTLFERFEAKLDKHQGNLLRSAVELAKDWRSDRALRRLEAMLSVADREVSLIITGNGDVLEPEQGIVAIGSGGSYAQSAARALLENTELAPRDIVTKSLEIAGDICIYTNRNFTLEVLE.

Residue T7 is part of the active site. Positions 162, 165, and 168 each coordinate Na(+).

Belongs to the peptidase T1B family. HslV subfamily. As to quaternary structure, a double ring-shaped homohexamer of HslV is capped on each side by a ring-shaped HslU homohexamer. The assembly of the HslU/HslV complex is dependent on binding of ATP.

It localises to the cytoplasm. It carries out the reaction ATP-dependent cleavage of peptide bonds with broad specificity.. Allosterically activated by HslU binding. Protease subunit of a proteasome-like degradation complex believed to be a general protein degrading machinery. The chain is ATP-dependent protease subunit HslV from Dechloromonas aromatica (strain RCB).